A 149-amino-acid chain; its full sequence is D-aminoacyl-tRNA deacylase (149 aa).

The Gly-cisPro motif, important for rejection of L-amino acids signature appears at 139–140 (GP).

This sequence belongs to the DTD family. As to quaternary structure, homodimer.

Its subcellular location is the cytoplasm. The enzyme catalyses glycyl-tRNA(Ala) + H2O = tRNA(Ala) + glycine + H(+). The catalysed reaction is a D-aminoacyl-tRNA + H2O = a tRNA + a D-alpha-amino acid + H(+). Functionally, an aminoacyl-tRNA editing enzyme that deacylates mischarged D-aminoacyl-tRNAs. Also deacylates mischarged glycyl-tRNA(Ala), protecting cells against glycine mischarging by AlaRS. Acts via tRNA-based rather than protein-based catalysis; rejects L-amino acids rather than detecting D-amino acids in the active site. By recycling D-aminoacyl-tRNA to D-amino acids and free tRNA molecules, this enzyme counteracts the toxicity associated with the formation of D-aminoacyl-tRNA entities in vivo and helps enforce protein L-homochirality. This chain is D-aminoacyl-tRNA deacylase (dtd1), found in Schizosaccharomyces pombe (strain 972 / ATCC 24843) (Fission yeast).